Here is a 90-residue protein sequence, read N- to C-terminus: Small ribosomal subunit protein bS18A (90 aa).

Belongs to the bacterial ribosomal protein bS18 family. In terms of assembly, part of the 30S ribosomal subunit. Forms a tight heterodimer with protein bS6.

In terms of biological role, binds as a heterodimer with protein bS6 to the central domain of the 16S rRNA, where it helps stabilize the platform of the 30S subunit. In Roseiflexus castenholzii (strain DSM 13941 / HLO8), this protein is Small ribosomal subunit protein bS18A.